The sequence spans 375 residues: Phosphoglycerate kinase (375 aa).

Val1, Asp2, Phe3, Asn4, Arg17, Ser40, His41, Gly43, Arg44, Leu99, Arg100, His147, and Arg148 together coordinate (2R)-3-phosphoglycerate. Position 191 (Gly191) interacts with ADP. Gly191 contributes to the CDP binding site. AMP is bound by residues Ala192 and Lys193. ATP is bound at residue Ala192. A Mg(2+)-binding site is contributed by Ala192. CDP is bound at residue Asp196. Position 196 (Asp196) interacts with Mg(2+). Residue Lys197 coordinates AMP. Lys197 is an ATP binding site. Gly215 provides a ligand contact to ADP. Residue Gly215 participates in CDP binding. Gly216 and Gly290 together coordinate AMP. ATP contacts are provided by Gly216 and Gly290. Positions 315 and 320 each coordinate CDP. Phe320 is a binding site for ADP. An AMP-binding site is contributed by Glu321. Glu321, Asp352, and Thr353 together coordinate ATP. Residue Asp352 coordinates Mg(2+).

Belongs to the phosphoglycerate kinase family. Monomer. Mg(2+) is required as a cofactor.

The catalysed reaction is (2R)-3-phosphoglycerate + ATP = (2R)-3-phospho-glyceroyl phosphate + ADP. It participates in carbohydrate degradation; glycolysis; pyruvate from D-glyceraldehyde 3-phosphate: step 2/5. In Tetrahymena pyriformis, this protein is Phosphoglycerate kinase (PGK).